We begin with the raw amino-acid sequence, 163 residues long: R-phycoerythrin alpha chain (163 aa).

(2R,3E)-phycoerythrobilin is bound by residues C82 and C139.

Belongs to the phycobiliprotein family. Heterodimer of an alpha and a beta chain. In terms of processing, contains two covalently linked bilin chromophores.

The protein localises to the plastid. The protein resides in the chloroplast thylakoid membrane. Light-harvesting photosynthetic bile pigment-protein from the phycobiliprotein complex. The protein is R-phycoerythrin alpha chain (cpeA) of Aglaothamnion neglectum (Red alga).